A 209-amino-acid chain; its full sequence is Outer-membrane lipoprotein LolB (209 aa).

The N-terminal stretch at 1-21 (MNNMKTFKFLTALFATAILTA) is a signal peptide. Cys22 is lipidated: N-palmitoyl cysteine. Cys22 carries S-diacylglycerol cysteine lipidation.

The protein belongs to the LolB family. As to quaternary structure, monomer.

It localises to the cell outer membrane. In terms of biological role, plays a critical role in the incorporation of lipoproteins in the outer membrane after they are released by the LolA protein. In Haemophilus influenzae (strain 86-028NP), this protein is Outer-membrane lipoprotein LolB.